Reading from the N-terminus, the 367-residue chain is Alanine racemase (367 aa).

The Proton acceptor; specific for D-alanine role is filled by lysine 40. At lysine 40 the chain carries N6-(pyridoxal phosphate)lysine. Position 136 (arginine 136) interacts with substrate. Tyrosine 263 (proton acceptor; specific for L-alanine) is an active-site residue. Methionine 310 contacts substrate.

The protein belongs to the alanine racemase family. Pyridoxal 5'-phosphate is required as a cofactor.

It carries out the reaction L-alanine = D-alanine. It participates in amino-acid biosynthesis; D-alanine biosynthesis; D-alanine from L-alanine: step 1/1. Catalyzes the interconversion of L-alanine and D-alanine. May also act on other amino acids. In Streptococcus pneumoniae (strain ATCC 700669 / Spain 23F-1), this protein is Alanine racemase (alr).